The sequence spans 250 residues: MIKIDNVKKFYTDKVKIGPLDIEIPKAGFTSLIGPNGAGKSTTLLMIGRLLDMDEGQIQVANMDVSESKSKDLAKVLTILRQENHFVTRLTVRQLVGFGRFPYSKGRLTKEDEVIISKYIDFLDLTNLENRYLDELSGGQRQRAYVAMVLCQETEYVLLDEPLNNLDVARSVQMMEHLRRAANEFGRTILTVMHDINFAAKYSDKICAMKDGQIAAFGTVEEVMDSTLLTDIFETRIEIIKGPYGPIAVY.

The ABC transporter domain maps to 2–236 (IKIDNVKKFY…TLLTDIFETR (235 aa)). 34-41 (GPNGAGKS) contributes to the ATP binding site.

This sequence belongs to the ABC transporter superfamily. As to quaternary structure, the complex is composed of two ATP-binding proteins (FatE), two transmembrane proteins (FatC and FatD) and a solute-binding protein (FpuA).

Its subcellular location is the cell membrane. The catalysed reaction is a Fe(III)-siderophore(out) + ATP + H2O = a Fe(III)-siderophore(in) + ADP + phosphate + H(+). Part of an ABC transporter complex involved in ferric-petrobactin uptake. Probably responsible for energy coupling to the transport system. The polypeptide is Petrobactin import ATP-binding protein FatE (Bacillus anthracis).